Reading from the N-terminus, the 184-residue chain is Signal peptidase complex subunit 3 (184 aa).

The Cytoplasmic portion of the chain corresponds to 1-14; that stretch reads MFSFVQRFQNVSNQ. A helical; Signal-anchor for type II membrane protein transmembrane segment spans residues 15 to 35; that stretch reads AFSMGIVMVVFIMASSYYQLI. Residues 36–184 lie on the Lumenal side of the membrane; sequence NNNAFSVPSN…TLTVENKNKV (149 aa). N-linked (GlcNAc...) asparagine glycans are attached at residues N102 and N173.

It belongs to the SPCS3 family. Component of the signal peptidase complex (SPC) composed of a catalytic subunit SEC11 and three accessory subunits SPC1, SPC2 and SPC3. The complex induces a local thinning of the ER membrane which is used to measure the length of the signal peptide (SP) h-region of protein substrates. This ensures the selectivity of the complex towards h-regions shorter than 18-20 amino acids. Interacts with SEC11. SPC associates with the translocon complex.

The protein resides in the endoplasmic reticulum membrane. Its function is as follows. Essential component of the signal peptidase complex (SPC) which catalyzes the cleavage of N-terminal signal sequences from nascent proteins as they are translocated into the lumen of the endoplasmic reticulum. Essential for the SPC catalytic activity, possibly by stabilizing and positioning the active center of the complex close to the lumenal surface. Essential for viability. The chain is Signal peptidase complex subunit 3 (SPC3) from Saccharomyces cerevisiae (strain ATCC 204508 / S288c) (Baker's yeast).